The chain runs to 385 residues: ELAV-like protein 4 (385 aa).

Residues 12–48 (TMEPQVSNGPTSNTSNGPSSNNRNCPSPMQTGAATDD) are disordered. Low complexity predominate over residues 18 to 33 (SNGPTSNTSNGPSSNN). Over residues 34–44 (RNCPSPMQTGA) the composition is skewed to polar residues. Ser38 is modified (phosphoserine). RRM domains lie at 51-129 (TNLI…YARP) and 137-217 (ANLY…FANN). The residue at position 233 (Ser233) is a Phosphoserine. Asymmetric dimethylarginine; by CARM1; alternate is present on Arg248. Omega-N-methylarginine; by CARM1; alternate is present on Arg248. The region spanning 302–380 (WCIFVYNLSP…RVLQVSFKTN (79 aa)) is the RRM 3 domain.

Belongs to the RRM elav family. Component of a TAU mRNP complex, at least composed of IGF2BP1, ELAVL4 and G3BP. Associates with the EIF4F cap-binding complex, composed of EIF4G, EIF4A, EIF4E and PABP. Within the EIF4F cap-binding complex, interacts with EIF4A. Interacts with SMN (via Tudor domain) in an RNA-independent manner; the interaction is required for localization of ELAVL4 to RNA granules. Interacts with MAP1 light chain LC1 (via C-terminus); the interaction contributes to the association of ELAVL4 with microtubules. Interacts with MAP1 light chain LC2. Post-translationally, methylated by CARM1, which leads to reduced RNA-binding activity and enhanced interaction with SMN. Methylation at Arg-248 by CARM1 weakens protective binding to the 3'UTR of CDKN1A mRNA and down-regulates CDKN1A protein expression, thereby maintaining cells in a proliferative state. Methylation is inhibited by NGF, which facilitates neurite outgrowth. In terms of tissue distribution, expressed in the brain, including the hippocampus, and in pancreatic beta cells (at protein level). Expressed in pyramidal neurons of the hippocampal CA3 and CA1 region and in the hilus but not in dentate granule cells (at protein level). Expressed in the dorsal root ganglion and the spinal cord (at protein level). Expressed in neural stem and progenitor cells (at protein level). Expressed in radial glia-like cells and in transient amplifying cells in the subventricular zone (SVZ), and in immature neurons both in the SVZ and the rostral migratory stream as well as in mature neurons in the olfactory bulb (at protein level). Expressed in testis and in the brain, including the hippocampus, the neocortex and the cerebellum. Expressed in lower- but not upper-layer primary neurons of the mature neocortex, in the hippocampal regions CA1-3 and the dentate gyrus. Expressed in the mitral and granule cells of the olfactory bulb, cerebral cortex, entorhinal cortex, thalamus, medial habenula, amygdala, granule cells of the cerebellum, pons, olivary nucleus, dorsal and ventral spinal cord and in dorsal root ganglia. Expressed in motor neurons. Isoform 4: Expressed in the brain. Isoform 5: Expressed in the brain. Isoform 6: Expressed in the brain. Isoform 7: Expressed in the brain. Isoform 8: Expressed in the brain. Isoform 9: Expressed in the brain. Isoform 10: Expressed in the brain. Isoform 11: Expressed in the brain.

Its subcellular location is the cytoplasm. The protein localises to the perikaryon. It is found in the cell projection. It localises to the dendrite. The protein resides in the axon. Its subcellular location is the growth cone. In terms of biological role, RNA-binding protein that is involved in the post-transcriptional regulation of mRNAs. Plays a role in the regulation of mRNA stability, alternative splicing and translation. Binds to AU-rich element (ARE) sequences in the 3' untranslated region (3'UTR) of target mRNAs, including GAP43, VEGF, FOS, CDKN1A and ACHE mRNA. Many of the target mRNAs are coding for RNA-binding proteins, transcription factors and proteins involved in RNA processing and/or neuronal development and function. By binding to the mRNA 3'UTR, decreases mRNA deadenylation and thereby contributes to the stabilization of mRNA molecules and their protection from decay. Also binds to the polyadenylated (poly(A)) tail in the 3'UTR of mRNA, thereby increasing its affinity for mRNA binding. Mainly plays a role in neuron-specific RNA processing by stabilization of mRNAs such as GAP43, ACHE and mRNAs of other neuronal proteins, thereby contributing to the differentiation of neural progenitor cells, nervous system development, learning and memory mechanisms. Involved in the negative regulation of the proliferative activity of neuronal stem cells and in the positive regulation of neuronal differentiation of neural progenitor cells. Promotes neuronal differentiation of neural stem/progenitor cells in the adult subventricular zone of the hippocampus by binding to and stabilizing SATB1 mRNA. Binds and stabilizes MSI1 mRNA in neural stem cells. Exhibits increased binding to ACHE mRNA during neuronal differentiation, thereby stabilizing ACHE mRNA and enhancing its expression. Protects CDKN1A mRNA from decay by binding to its 3'-UTR. May bind to APP and BACE1 mRNAS and the BACE1AS lncRNA and enhance their stabilization. Plays a role in neurite outgrowth and in the establishment and maturation of dendritic arbors, thereby contributing to neocortical and hippocampal circuitry function. Stabilizes GAP43 mRNA and protects it from decay during postembryonic development in the brain. By promoting the stabilization of GAP43 mRNA, plays a role in NGF-mediated neurite outgrowth. Binds to BDNF long 3'UTR mRNA, thereby leading to its stabilization and increased dendritic translation after activation of PKC. By increasing translation of BDNF after nerve injury, may contribute to nerve regeneration. Acts as a stabilizing factor by binding to the 3'UTR of NOVA1 mRNA, thereby increasing its translation and enhancing its functional activity in neuron-specific splicing. Stimulates translation of mRNA in a poly(A)- and cap-dependent manner, possibly by associating with the EIF4F cap-binding complex. May also negatively regulate translation by binding to the 5'UTR of Ins2 mRNA, thereby repressing its translation. Upon glucose stimulation, Ins2 mRNA is released from ELAVL4 and translational inhibition is abolished. Also plays a role in the regulation of alternative splicing. May regulate alternative splicing of CALCA pre-mRNA into Calcitonin and Calcitonin gene-related peptide 1 (CGRP) by competing with splicing regulator TIAR for binding to U-rich sequences of CALCA pre-mRNA. This Mus musculus (Mouse) protein is ELAV-like protein 4 (Elavl4).